Here is a 304-residue protein sequence, read N- to C-terminus: Thyroxine 5-deiodinase (304 aa).

Residues 1-22 (MPRQAASRLVVGEGEGPPGASG) form a disordered region. Residues 1 to 44 (MPRQAASRLVVGEGEGPPGASGPAATMLRSLLLHSLRLCAQTAS) lie on the Cytoplasmic side of the membrane. The chain crosses the membrane as a helical; Signal-anchor for type II membrane protein span at residues 45 to 67 (CLVLFPRFLGTAFMLWLLDFLCI). Residues 68 to 304 (RKHFLRRRHP…QLHGTRPHRF (237 aa)) are Extracellular-facing. U170 is a catalytic residue. Position 170 (U170) is a non-standard amino acid, selenocysteine.

Belongs to the iodothyronine deiodinase family. In terms of assembly, monomer. Homodimer. May undergo minor heretodimerization with DIO1 and DIO2.

The protein localises to the cell membrane. Its subcellular location is the endosome membrane. It catalyses the reaction 3,3',5'-triiodo-L-thyronine + iodide + A + H(+) = L-thyroxine + AH2. The catalysed reaction is 3,3'-diiodo-L-thyronine + iodide + A + H(+) = 3,3',5-triiodo-L-thyronine + AH2. The enzyme catalyses 3-iodo-L-thyronine + iodide + A + H(+) = 3,5-diiodo-L-thyronine + AH2. It carries out the reaction L-thyronine + iodide + A + H(+) = 3-iodo-L-thyronine + AH2. It catalyses the reaction 3',5'-diiodo-L-thyronine + iodide + A + H(+) = 3,3',5'-triiodo-L-thyronine + AH2. The catalysed reaction is 3'-iodo-L-thyronine + iodide + A + H(+) = 3,3'-diiodo-L-thyronine + AH2. The enzyme catalyses 3,3',5'-triiodothyronamine + iodide + A + H(+) = 3,3',5,5'-tetraiodothyronamine + AH2. It carries out the reaction 3',5'-diiodothyronamine + iodide + A + H(+) = 3,3',5'-triiodothyronamine + AH2. It catalyses the reaction 3,3'-diiodothyronamine + iodide + A + H(+) = 3,3',5-triiodothyronamine + AH2. The catalysed reaction is 3-iodothyronamine + iodide + A + H(+) = 3,5-diiodothyronamine + AH2. The enzyme catalyses 3'-iodothyronamine + iodide + A + H(+) = 3,3'-diiodothyronamine + AH2. It carries out the reaction thyronamine + iodide + A + H(+) = 3-iodothyronamine + AH2. Its function is as follows. Plays a crucial role in the metabolism of thyroid hormones (TH) and has specific roles in TH activation and inactivation by deiodination. Catalyzes the deiodination of L-thyroxine (T4) to 3,3',5'-triiodothyronine (rT3), 3,5,3'-triiodothyronine (T3) to 3,3'-diiodothyronine (3,3'-T2), 3,5-diiodothyronine (3,5-T2) to 3-monoiodothyronine (3-T1), rT3 to 3',5'-diiodothyronine (3',5'-T2) and 3,3'-T2 to 3'-monoiodothyronine (3'-T1) via inner-ring deiodination (IRD). Catalyzes the deiodination of 3-T1 to L-thyronine (T0) via outer-ring deiodination (ORD). Catalyzes the tyrosyl ring deiodinations of 3,3',5,5'-tetraiodothyronamine, 3,3',5'-triiodothyronamine, 3,5,3'-triiodothyronamine, 3,5-diiodothyronamine, 3,3'-diiodothyronamine and 3-iodothyronamine. This Mus musculus (Mouse) protein is Thyroxine 5-deiodinase (Dio3).